A 173-amino-acid chain; its full sequence is RNA polymerase sigma factor TcsR (173 aa).

The sigma-70 factor domain-4 stretch occupies residues 122–169; the sequence is IKDLTQNEKNILRKIYLHGLRESEISRELNISRQAVNKTHLRALEKLK. The segment at residues 143-162 is a DNA-binding region (H-T-H motif); it reads ESEISRELNISRQAVNKTHL.

This sequence belongs to the sigma-70 factor family.

Functionally, sigma factors are initiation factors that promote the attachment of RNA polymerase to specific initiation sites and are then released. Transcriptional regulator specifically required to activate expression of the toxin gene locus, composed of tcsL and tcdE/utxA. The sequence is that of RNA polymerase sigma factor TcsR from Paraclostridium sordellii (Clostridium sordellii).